Reading from the N-terminus, the 357-residue chain is 3-isopropylmalate dehydrogenase (357 aa).

NAD(+) is bound at residue 76–89 (GPQWDTIDPSLRPE). R96, R106, R134, and D224 together coordinate substrate. Residues D224, D248, and D252 each coordinate Mg(2+). NAD(+) is bound at residue 282–294 (GSAPDIAGKGIAN).

Belongs to the isocitrate and isopropylmalate dehydrogenases family. LeuB type 1 subfamily. As to quaternary structure, homodimer. It depends on Mg(2+) as a cofactor. Mn(2+) is required as a cofactor.

It is found in the cytoplasm. The enzyme catalyses (2R,3S)-3-isopropylmalate + NAD(+) = 4-methyl-2-oxopentanoate + CO2 + NADH. It participates in amino-acid biosynthesis; L-leucine biosynthesis; L-leucine from 3-methyl-2-oxobutanoate: step 3/4. Functionally, catalyzes the oxidation of 3-carboxy-2-hydroxy-4-methylpentanoate (3-isopropylmalate) to 3-carboxy-4-methyl-2-oxopentanoate. The product decarboxylates to 4-methyl-2 oxopentanoate. The polypeptide is 3-isopropylmalate dehydrogenase (Xanthomonas euvesicatoria pv. vesicatoria (strain 85-10) (Xanthomonas campestris pv. vesicatoria)).